We begin with the raw amino-acid sequence, 409 residues long: uncharacterized protein (409 aa).

The span at 36–50 (HLKAKARAQESDSDR) shows a compositional bias: basic and acidic residues. Disordered regions lie at residues 36-67 (HLKAKARAQESDSDRPCSSIESSSEPASTFSS), 239-298 (IENT…SSTI), and 338-373 (RSQIKGKDSEGRRKIQRRHKKPLAEEEADPTLTGPR). Positions 51 to 67 (PCSSIESSSEPASTFSS) are enriched in low complexity. Positions 245 to 265 (VREESNQEHPPGKQEKTEKHP) are enriched in basic and acidic residues. The span at 268 to 281 (LQGSHQAEPETSSK) shows a compositional bias: polar residues. 2 stretches are compositionally biased toward basic and acidic residues: residues 282–294 (NSEEYEKSLKMDD) and 338–350 (RSQIKGKDSEGRR).

This is an uncharacterized protein from Homo sapiens (Human).